A 239-amino-acid chain; its full sequence is Biosynthetic peptidoglycan transglycosylase (239 aa).

Residues 29–49 (GMFGLGALMLVWIVAYAVVPV) form a helical membrane-spanning segment.

Belongs to the glycosyltransferase 51 family.

It is found in the cell inner membrane. It carries out the reaction [GlcNAc-(1-&gt;4)-Mur2Ac(oyl-L-Ala-gamma-D-Glu-L-Lys-D-Ala-D-Ala)](n)-di-trans,octa-cis-undecaprenyl diphosphate + beta-D-GlcNAc-(1-&gt;4)-Mur2Ac(oyl-L-Ala-gamma-D-Glu-L-Lys-D-Ala-D-Ala)-di-trans,octa-cis-undecaprenyl diphosphate = [GlcNAc-(1-&gt;4)-Mur2Ac(oyl-L-Ala-gamma-D-Glu-L-Lys-D-Ala-D-Ala)](n+1)-di-trans,octa-cis-undecaprenyl diphosphate + di-trans,octa-cis-undecaprenyl diphosphate + H(+). The protein operates within cell wall biogenesis; peptidoglycan biosynthesis. Functionally, peptidoglycan polymerase that catalyzes glycan chain elongation from lipid-linked precursors. The sequence is that of Biosynthetic peptidoglycan transglycosylase from Jannaschia sp. (strain CCS1).